We begin with the raw amino-acid sequence, 353 residues long: Inactive ADP-ribosyltransferase ARH2 (353 aa).

S27 carries the phosphoserine modification.

This sequence belongs to the ADP-ribosylglycohydrolase family.

The protein resides in the cytoplasm. It localises to the myofibril. Its subcellular location is the sarcomere. Required for myofibril assembly and outgrowth of the cardiac chambers in the developing heart. Appears to be catalytically inactive, showing no activity against O-acetyl-ADP-ribose. This chain is Inactive ADP-ribosyltransferase ARH2 (Adprhl1), found in Rattus norvegicus (Rat).